A 25-amino-acid chain; its full sequence is NYDKPPVEKPPVYKPPVEKPPVYKP.

Residues 1–25 (NYDKPPVEKPPVYKPPVEKPPVYKP) are disordered. 4 tandem repeats follow at residues 5 to 9 (PPVEK), 10 to 14 (PPVYK), 15 to 19 (PPVEK), and 20 to 24 (PPVYK). Positions 5-24 (PPVEKPPVYKPPVEKPPVYK) are 4 X 5 AA tandem repeats of P-P-V-[EY]-K. 4-hydroxyproline occurs at positions 6, 11, 16, and 21. Residues 8–25 (EKPPVYKPPVEKPPVYKP) are compositionally biased toward pro residues.

This sequence belongs to the plant proline-rich protein superfamily. ENOD12 family.

It is found in the secreted. The protein localises to the cell wall. The chain is Repetitive proline-rich cell wall protein from Phaseolus vulgaris (Kidney bean).